The sequence spans 256 residues: uncharacterized protein (256 aa).

The signal sequence occupies residues 1–22 (MKSIKRIGLCISLLILSIFVTS). Residue C23 is the site of N-palmitoyl cysteine attachment. C23 carries S-diacylglycerol cysteine lipidation.

This sequence belongs to the staphylococcal tandem lipoprotein family.

The protein resides in the cell membrane. This is an uncharacterized protein from Staphylococcus aureus (strain USA300).